The following is a 621-amino-acid chain: DnaJ homolog subfamily C member 2 (621 aa).

M1 carries the N-acetylmethionine modification. A phosphoserine mark is found at S47, S49, S60, and S63. The J domain maps to 88 to 161; that stretch reads DHYAVLGLGH…VKRRAFNSVD (74 aa). Residues 160 to 250 form a ZRF1-UBD region; the sequence is VDPTFDNSVP…RDERRWIEKQ (91 aa). A Phosphoserine modification is found at S183. Disordered stretches follow at residues 294-315 and 427-453; these read EKKAKAEAKRKEQEAKEKQRQA and EEAEAHMRQASKNTEKSAGGGGNGSKN. SANT domains are found at residues 449–511 and 549–604; these read NGSK…KLDP and TDFT…EMVK.

In terms of assembly, component of ribosome-associated complex (RAC), a heterodimer composed of Hsp70/DnaK-type chaperone HSPA14 and Hsp40/DnaJ-type chaperone DNAJC2. Interacts (via ZRF1-UBD region) with ID1. In terms of processing, phosphorylated in M (mitotic) phase.

Its subcellular location is the nucleus. It localises to the cytoplasm. It is found in the cytosol. Acts both as a chaperone in the cytosol and as a chromatin regulator in the nucleus. When cytosolic, acts as a molecular chaperone: component of the ribosome-associated complex (RAC), a complex involved in folding or maintaining nascent polypeptides in a folding-competent state. In the RAC complex, stimulates the ATPase activity of the ribosome-associated pool of Hsp70-type chaperones HSPA14 that bind to the nascent polypeptide chain. When nuclear, mediates the switching from polycomb-repressed genes to an active state: specifically recruited at histone H2A ubiquitinated at 'Lys-119' (H2AK119ub), and promotes the displacement of the polycomb PRC1 complex from chromatin, thereby facilitating transcription activation. The polypeptide is DnaJ homolog subfamily C member 2 (DNAJC2) (Macaca fascicularis (Crab-eating macaque)).